The following is a 391-amino-acid chain: Carbamoyl phosphate synthase small chain (391 aa).

A CPSase region spans residues 1 to 199 (MVRISGFCCA…TWEFIEGPTT (199 aa)). 3 residues coordinate L-glutamine: serine 61, glycine 251, and glycine 253. One can recognise a Glutamine amidotransferase type-1 domain in the interval 203 to 388 (TVVAIDFGVK…VALMRDRQPT (186 aa)). Cysteine 279 serves as the catalytic Nucleophile. Positions 280, 283, 319, 321, and 322 each coordinate L-glutamine. Active-site residues include histidine 361 and glutamate 363.

It belongs to the CarA family. In terms of assembly, composed of two chains; the small (or glutamine) chain promotes the hydrolysis of glutamine to ammonia, which is used by the large (or ammonia) chain to synthesize carbamoyl phosphate. Tetramer of heterodimers (alpha,beta)4.

The enzyme catalyses hydrogencarbonate + L-glutamine + 2 ATP + H2O = carbamoyl phosphate + L-glutamate + 2 ADP + phosphate + 2 H(+). It catalyses the reaction L-glutamine + H2O = L-glutamate + NH4(+). It functions in the pathway amino-acid biosynthesis; L-arginine biosynthesis; carbamoyl phosphate from bicarbonate: step 1/1. It participates in pyrimidine metabolism; UMP biosynthesis via de novo pathway; (S)-dihydroorotate from bicarbonate: step 1/3. Functionally, small subunit of the glutamine-dependent carbamoyl phosphate synthetase (CPSase). CPSase catalyzes the formation of carbamoyl phosphate from the ammonia moiety of glutamine, carbonate, and phosphate donated by ATP, constituting the first step of 2 biosynthetic pathways, one leading to arginine and/or urea and the other to pyrimidine nucleotides. The small subunit (glutamine amidotransferase) binds and cleaves glutamine to supply the large subunit with the substrate ammonia. This is Carbamoyl phosphate synthase small chain from Synechococcus sp. (strain ATCC 27144 / PCC 6301 / SAUG 1402/1) (Anacystis nidulans).